The following is a 541-amino-acid chain: Effector protein hopAB1 (541 aa).

Disordered stretches follow at residues 1-94 (MPGI…EAQQ), 168-222 (QRAL…RHPQ), and 317-338 (RQTT…SGRR). The span at 18–31 (TDGEPVTEREHDSS) shows a compositional bias: basic and acidic residues. The segment covering 183–196 (SSSGSSQRSLIGRS) has biased composition (low complexity).

The protein belongs to the HopAB family.

Its subcellular location is the secreted. Functionally, effector protein that plays different roles depending on the species and plant cultivars that interact with the pathogen. Acts as a virulence determinant by enhancing the development of disease symptoms and bacterial growth. Acts as an avirulence factor by eliciting hypersensitive response (HR) and plant resistance. This is Effector protein hopAB1 (hopAB1) from Pseudomonas savastanoi (Pseudomonas syringae pv. savastanoi).